Reading from the N-terminus, the 255-residue chain is 5'-nucleotidase SurE (255 aa).

A divalent metal cation contacts are provided by aspartate 8, aspartate 9, serine 40, and asparagine 93.

It belongs to the SurE nucleotidase family. The cofactor is a divalent metal cation.

It is found in the cytoplasm. It catalyses the reaction a ribonucleoside 5'-phosphate + H2O = a ribonucleoside + phosphate. Nucleotidase that shows phosphatase activity on nucleoside 5'-monophosphates. The chain is 5'-nucleotidase SurE from Bradyrhizobium sp. (strain ORS 278).